Reading from the N-terminus, the 355-residue chain is tRNA uridine(34) hydroxylase (355 aa).

The Rhodanese domain maps to 146–240 (DDPDTLFVDM…YARKAKEQGL (95 aa)). The active-site Cysteine persulfide intermediate is Cys-200. The interval 333–355 (NKSKGLLQATMHIPSPEKSADEK) is disordered.

The protein belongs to the TrhO family.

The catalysed reaction is uridine(34) in tRNA + AH2 + O2 = 5-hydroxyuridine(34) in tRNA + A + H2O. Catalyzes oxygen-dependent 5-hydroxyuridine (ho5U) modification at position 34 in tRNAs. This Yersinia pseudotuberculosis serotype O:1b (strain IP 31758) protein is tRNA uridine(34) hydroxylase.